The following is an 88-amino-acid chain: UPF0250 protein Sfri_0694 (88 aa).

The protein belongs to the UPF0250 family.

The polypeptide is UPF0250 protein Sfri_0694 (Shewanella frigidimarina (strain NCIMB 400)).